A 126-amino-acid polypeptide reads, in one-letter code: MADEIAKAQVARPGGDTIFGKIIRKEIPAKIIFEDDQCLAFHDISPQAPTHFLVIPKKHISQISAAEDADESLLGHLMIVGKKCAADLGLKKGYRMVVNEGSDGGQSVYHVHLHVLGGRQMNWPPG.

N-acetylalanine is present on Ala2. In terms of domain architecture, HIT spans 18–126 (IFGKIIRKEI…GGRQMNWPPG (109 aa)). An N6-acetyllysine mark is found at Lys21 and Lys30. 43-44 (DI) serves as a coordination point for AMP. Ser45 and Ser72 each carry phosphoserine. AMP is bound by residues Asn99, 105–107 (GQS), and 112–114 (HLH). Residues 110–114 (HVHLH) carry the Histidine triad motif motif. The active-site Tele-AMP-histidine intermediate is His112.

It belongs to the HINT family. Homodimer. Interacts with CDK7. Interacts with RUVBL1 and RUVBL2 and is associated with the LEF1/TCF1-CTNNB1 complex and with a KAT5 histone acetyltransferase complex. Identified in a complex with MITF and CTNNB1. Interacts with CDC34 and RBX1, and is part of a SCF (SKP2-CUL1-F-box protein) E3 ubiquitin-protein ligase complex. Interacts with SUMO1, SUMO2 and RGS17. Interacts with the Ten-1 ICD form of TENM1. Interacts with CALM1; interaction increases in the presence of calcium ions. Widely expressed.

It localises to the cytoplasm. Its subcellular location is the nucleus. It catalyses the reaction adenosine 5'-phosphoramidate + H2O = AMP + NH4(+). Its function is as follows. Exhibits adenosine 5'-monophosphoramidase activity, hydrolyzing purine nucleotide phosphoramidates with a single phosphate group such as adenosine 5'monophosphoramidate (AMP-NH2) to yield AMP and NH2. Hydrolyzes adenosine 5'monophosphomorpholidate (AMP-morpholidate) and guanosine 5'monophosphomorpholidate (GMP-morpholidate). Hydrolyzes lysyl-AMP (AMP-N-epsilon-(N-alpha-acetyl lysine methyl ester)) generated by lysine tRNA ligase. Hydrolyzes Met-AMP, His-AMP, Asp-AMP, lysyl-GMP (GMP-N-epsilon-(N-alpha-acetyl lysine methyl ester)) and AMP-N-alanine methyl ester. Can also convert adenosine 5'-O-phosphorothioate and guanosine 5'-O-phosphorothioate to the corresponding nucleoside 5'-O-phosphates with concomitant release of hydrogen sulfide. In addition, functions as a scaffolding protein that modulates transcriptional activation by the LEF1/TCF1-CTNNB1 complex and by the complex formed with MITF and CTNNB1. Modulates p53/TP53 levels and p53/TP53-mediated apoptosis. Modulates proteasomal degradation of target proteins by the SCF (SKP2-CUL1-F-box protein) E3 ubiquitin-protein ligase complex. Also exhibits SUMO-specific isopeptidase activity, deconjugating SUMO1 from RANGAP1 and RGS17. This is Adenosine 5'-monophosphoramidase HINT1 (HINT1) from Oryctolagus cuniculus (Rabbit).